The primary structure comprises 474 residues: Replication-associated protein (474 aa).

The short motif at 248–255 (GKRFQEDR) is the Nuclear localization signal element. The disordered stretch occupies residues 455–474 (AFAPGFSLTSEPEPKRRRFF).

The protein localises to the host nucleus. In terms of biological role, plays an essential for the replication of viral DNA. Presumably cleaves viral genomic dsRNA replicative form to initiate rolling circle replication. This chain is Replication-associated protein, found in Avon-Heathcote Estuary associated kieseladnavirus (AHEaBV).